The following is a 254-amino-acid chain: 3-deoxy-manno-octulosonate cytidylyltransferase (254 aa).

It belongs to the KdsB family.

The protein localises to the cytoplasm. The catalysed reaction is 3-deoxy-alpha-D-manno-oct-2-ulosonate + CTP = CMP-3-deoxy-beta-D-manno-octulosonate + diphosphate. The protein operates within nucleotide-sugar biosynthesis; CMP-3-deoxy-D-manno-octulosonate biosynthesis; CMP-3-deoxy-D-manno-octulosonate from 3-deoxy-D-manno-octulosonate and CTP: step 1/1. It participates in bacterial outer membrane biogenesis; lipopolysaccharide biosynthesis. Activates KDO (a required 8-carbon sugar) for incorporation into bacterial lipopolysaccharide in Gram-negative bacteria. This chain is 3-deoxy-manno-octulosonate cytidylyltransferase, found in Porphyromonas gingivalis (strain ATCC BAA-308 / W83).